Consider the following 197-residue polypeptide: UPF0301 protein Adeh_3962 (197 aa).

The protein belongs to the UPF0301 (AlgH) family.

This Anaeromyxobacter dehalogenans (strain 2CP-C) protein is UPF0301 protein Adeh_3962.